A 169-amino-acid chain; its full sequence is MNENFICNKYFVTILIIIIIILIVLLIVFLTKKNSRIERMENIDKLTFAEKPWSNTQDADTYKIVDNDFDKYVDELTKLLGNKNRAKRKDEVYRDYIQSKPINKNNQQTKNTPTPLDDRPDLSQCQPCICPNDRYIPNSESSENDNHLDREIRKKISELGSYVKNKYKR.

The chain crosses the membrane as a helical span at residues 10-30; it reads YFVTILIIIIIILIVLLIVFL. The segment at 98–123 is disordered; it reads QSKPINKNNQQTKNTPTPLDDRPDLS. Residues 100–115 are compositionally biased toward low complexity; the sequence is KPINKNNQQTKNTPTP.

It localises to the membrane. This is an uncharacterized protein from Acanthamoeba polyphaga (Amoeba).